The primary structure comprises 227 residues: Cytochrome c oxidase subunit 2 (227 aa).

Topologically, residues Met1–Ser14 are mitochondrial intermembrane. The helical transmembrane segment at Pro15–Met45 threads the bilayer. Topologically, residues Leu46–Gln59 are mitochondrial matrix. A helical transmembrane segment spans residues Glu60–Met87. Residues Asp88–Ile227 are Mitochondrial intermembrane-facing. His161, Cys196, Glu198, Cys200, His204, and Met207 together coordinate Cu cation. Glu198 provides a ligand contact to Mg(2+). Residue Tyr218 is modified to Phosphotyrosine.

The protein belongs to the cytochrome c oxidase subunit 2 family. Component of the cytochrome c oxidase (complex IV, CIV), a multisubunit enzyme composed of 14 subunits. The complex is composed of a catalytic core of 3 subunits MT-CO1, MT-CO2 and MT-CO3, encoded in the mitochondrial DNA, and 11 supernumerary subunits COX4I, COX5A, COX5B, COX6A, COX6B, COX6C, COX7A, COX7B, COX7C, COX8 and NDUFA4, which are encoded in the nuclear genome. The complex exists as a monomer or a dimer and forms supercomplexes (SCs) in the inner mitochondrial membrane with NADH-ubiquinone oxidoreductase (complex I, CI) and ubiquinol-cytochrome c oxidoreductase (cytochrome b-c1 complex, complex III, CIII), resulting in different assemblies (supercomplex SCI(1)III(2)IV(1) and megacomplex MCI(2)III(2)IV(2)). Found in a complex with TMEM177, COA6, COX18, COX20, SCO1 and SCO2. Interacts with TMEM177 in a COX20-dependent manner. Interacts with COX20. Interacts with COX16. Requires Cu cation as cofactor.

Its subcellular location is the mitochondrion inner membrane. It catalyses the reaction 4 Fe(II)-[cytochrome c] + O2 + 8 H(+)(in) = 4 Fe(III)-[cytochrome c] + 2 H2O + 4 H(+)(out). Component of the cytochrome c oxidase, the last enzyme in the mitochondrial electron transport chain which drives oxidative phosphorylation. The respiratory chain contains 3 multisubunit complexes succinate dehydrogenase (complex II, CII), ubiquinol-cytochrome c oxidoreductase (cytochrome b-c1 complex, complex III, CIII) and cytochrome c oxidase (complex IV, CIV), that cooperate to transfer electrons derived from NADH and succinate to molecular oxygen, creating an electrochemical gradient over the inner membrane that drives transmembrane transport and the ATP synthase. Cytochrome c oxidase is the component of the respiratory chain that catalyzes the reduction of oxygen to water. Electrons originating from reduced cytochrome c in the intermembrane space (IMS) are transferred via the dinuclear copper A center (CU(A)) of subunit 2 and heme A of subunit 1 to the active site in subunit 1, a binuclear center (BNC) formed by heme A3 and copper B (CU(B)). The BNC reduces molecular oxygen to 2 water molecules using 4 electrons from cytochrome c in the IMS and 4 protons from the mitochondrial matrix. This chain is Cytochrome c oxidase subunit 2 (MT-CO2), found in Oenomys hypoxanthus (Rufous-nosed rat).